Reading from the N-terminus, the 89-residue chain is Antitoxin RelB (89 aa).

Belongs to the phD/YefM antitoxin family. In terms of assembly, interacts with toxin RelE, which neutralizes its toxicity. Also interacts with toxins RelG and RelK in vitro, in M.smegmatis coexpression with non-cognate toxins neutralizes the toxicity of RelG while increasing the toxicity of RelK.

Functionally, antitoxin component of a type II toxin-antitoxin (TA) system. Upon expression in M.smegmatis neutralizes the effect of toxin RelE. In terms of biological role, induces its own promoter, in combination with RelE represses its own promoter. Binds DNA in complex with toxin RelE but not alone. The chain is Antitoxin RelB (relB) from Mycobacterium tuberculosis (strain ATCC 25618 / H37Rv).